Consider the following 123-residue polypeptide: Small ribosomal subunit protein uS13 (123 aa).

Residues 99–123 (RGQRTRTNARTRKGPRRTVGVKRKK) are disordered.

It belongs to the universal ribosomal protein uS13 family. Part of the 30S ribosomal subunit. Forms a loose heterodimer with protein S19. Forms two bridges to the 50S subunit in the 70S ribosome.

Its function is as follows. Located at the top of the head of the 30S subunit, it contacts several helices of the 16S rRNA. In the 70S ribosome it contacts the 23S rRNA (bridge B1a) and protein L5 of the 50S subunit (bridge B1b), connecting the 2 subunits; these bridges are implicated in subunit movement. Contacts the tRNAs in the A and P-sites. This is Small ribosomal subunit protein uS13 from Carboxydothermus hydrogenoformans (strain ATCC BAA-161 / DSM 6008 / Z-2901).